The primary structure comprises 280 residues: Eukaryotic translation initiation factor 3 subunit F-1 (280 aa).

The MPN domain occupies 8-138 (VRVHPVVLFQ…LRAYVCIQLG (131 aa)).

The protein belongs to the eIF-3 subunit F family. Component of the eukaryotic translation initiation factor 3 (eIF-3) complex. The eIF-3 complex interacts with pix.

Its subcellular location is the cytoplasm. Functionally, component of the eukaryotic translation initiation factor 3 (eIF-3) complex, which is involved in protein synthesis of a specialized repertoire of mRNAs and, together with other initiation factors, stimulates binding of mRNA and methionyl-tRNAi to the 40S ribosome. The eIF-3 complex specifically targets and initiates translation of a subset of mRNAs involved in cell proliferation. In Drosophila erecta (Fruit fly), this protein is Eukaryotic translation initiation factor 3 subunit F-1.